The chain runs to 199 residues: Protein-methionine-sulfoxide reductase heme-binding subunit MsrQ (199 aa).

A run of 4 helical transmembrane segments spans residues 10-30, 82-102, 116-136, and 153-173; these read WLKV…FWAI, LWCF…ELGI, PYLT…LTST, and VVYL…KILS.

This sequence belongs to the MsrQ family. Heterodimer of a catalytic subunit (MsrP) and a heme-binding subunit (MsrQ). FMN is required as a cofactor. It depends on heme b as a cofactor.

It localises to the cell inner membrane. Part of the MsrPQ system that repairs oxidized periplasmic proteins containing methionine sulfoxide residues (Met-O), using respiratory chain electrons. Thus protects these proteins from oxidative-stress damage caused by reactive species of oxygen and chlorine generated by the host defense mechanisms. MsrPQ is essential for the maintenance of envelope integrity under bleach stress, rescuing a wide series of structurally unrelated periplasmic proteins from methionine oxidation, including the primary periplasmic chaperone SurA and the lipoprotein Pal. MsrQ provides electrons for reduction to the reductase catalytic subunit MsrP, using the quinone pool of the respiratory chain. This Salmonella newport (strain SL254) protein is Protein-methionine-sulfoxide reductase heme-binding subunit MsrQ.